We begin with the raw amino-acid sequence, 144 residues long: Large ribosomal subunit protein uL15 (144 aa).

The disordered stretch occupies residues 1–57 (MKLNDLSPAPGSRREKHRPGRGIGSGLGKTGGRGHKGQTSRSGGTIAPGFEGGQQPL). The span at 21 to 31 (RGIGSGLGKTG) shows a compositional bias: gly residues.

Belongs to the universal ribosomal protein uL15 family. As to quaternary structure, part of the 50S ribosomal subunit.

Binds to the 23S rRNA. The polypeptide is Large ribosomal subunit protein uL15 (Pseudomonas fluorescens (strain ATCC BAA-477 / NRRL B-23932 / Pf-5)).